Reading from the N-terminus, the 341-residue chain is Glycerol-3-phosphate dehydrogenase [NAD(P)+] (341 aa).

4 residues coordinate NADPH: Ser14, Phe15, Arg35, and Lys108. Sn-glycerol 3-phosphate-binding residues include Lys108 and Gly136. Ala140 contributes to the NADPH binding site. Residues Lys191, Asp244, Ser254, Arg255, and Asn256 each contribute to the sn-glycerol 3-phosphate site. Residue Lys191 is the Proton acceptor of the active site. Residue Arg255 participates in NADPH binding. NADPH contacts are provided by Val279 and Glu281.

This sequence belongs to the NAD-dependent glycerol-3-phosphate dehydrogenase family.

The protein localises to the cytoplasm. It carries out the reaction sn-glycerol 3-phosphate + NAD(+) = dihydroxyacetone phosphate + NADH + H(+). It catalyses the reaction sn-glycerol 3-phosphate + NADP(+) = dihydroxyacetone phosphate + NADPH + H(+). It participates in membrane lipid metabolism; glycerophospholipid metabolism. Functionally, catalyzes the reduction of the glycolytic intermediate dihydroxyacetone phosphate (DHAP) to sn-glycerol 3-phosphate (G3P), the key precursor for phospholipid synthesis. The sequence is that of Glycerol-3-phosphate dehydrogenase [NAD(P)+] from Pseudomonas putida (strain ATCC 47054 / DSM 6125 / CFBP 8728 / NCIMB 11950 / KT2440).